A 364-amino-acid chain; its full sequence is Ribosomal RNA large subunit methyltransferase F (364 aa).

Low complexity predominate over residues 1–17 (MPKPAIKTAAKPATSSA). The segment at 1–53 (MPKPAIKTAAKPATSSAGKRGKPNTPKSVAKPKTAKPKTASKPKVKPGEKKRL) is disordered. Residues 33–53 (KTAKPKTASKPKVKPGEKKRL) are compositionally biased toward basic residues.

It belongs to the methyltransferase superfamily. METTL16/RlmF family.

Its subcellular location is the cytoplasm. The catalysed reaction is adenosine(1618) in 23S rRNA + S-adenosyl-L-methionine = N(6)-methyladenosine(1618) in 23S rRNA + S-adenosyl-L-homocysteine + H(+). In terms of biological role, specifically methylates the adenine in position 1618 of 23S rRNA. In Shewanella sp. (strain MR-7), this protein is Ribosomal RNA large subunit methyltransferase F.